The primary structure comprises 699 residues: Elongation factor G 1 (699 aa).

A tr-type G domain is found at 8 to 290 (ERYRNIGICA…AVIEYLPSPT (283 aa)). GTP is bound by residues 17–24 (AHVDAGKT), 88–92 (DTPGH), and 142–145 (NKMD).

The protein belongs to the TRAFAC class translation factor GTPase superfamily. Classic translation factor GTPase family. EF-G/EF-2 subfamily.

It localises to the cytoplasm. Its function is as follows. Catalyzes the GTP-dependent ribosomal translocation step during translation elongation. During this step, the ribosome changes from the pre-translocational (PRE) to the post-translocational (POST) state as the newly formed A-site-bound peptidyl-tRNA and P-site-bound deacylated tRNA move to the P and E sites, respectively. Catalyzes the coordinated movement of the two tRNA molecules, the mRNA and conformational changes in the ribosome. In Hahella chejuensis (strain KCTC 2396), this protein is Elongation factor G 1.